The chain runs to 133 residues: Small ribosomal subunit protein uS8 (133 aa).

Belongs to the universal ribosomal protein uS8 family. As to quaternary structure, part of the 30S ribosomal subunit. Contacts proteins S5 and S12.

In terms of biological role, one of the primary rRNA binding proteins, it binds directly to 16S rRNA central domain where it helps coordinate assembly of the platform of the 30S subunit. The sequence is that of Small ribosomal subunit protein uS8 from Parasynechococcus marenigrum (strain WH8102).